Here is a 69-residue protein sequence, read N- to C-terminus: DNA-directed RNA polymerase subunit omega (69 aa).

Belongs to the RNA polymerase subunit omega family. The RNAP catalytic core consists of 2 alpha, 1 beta, 1 beta' and 1 omega subunit. When a sigma factor is associated with the core the holoenzyme is formed, which can initiate transcription.

The enzyme catalyses RNA(n) + a ribonucleoside 5'-triphosphate = RNA(n+1) + diphosphate. Promotes RNA polymerase assembly. Latches the N- and C-terminal regions of the beta' subunit thereby facilitating its interaction with the beta and alpha subunits. This chain is DNA-directed RNA polymerase subunit omega, found in Geotalea uraniireducens (strain Rf4) (Geobacter uraniireducens).